The chain runs to 401 residues: Glycerol-1-phosphate dehydrogenase [NAD(P)+] (401 aa).

NAD(+) contacts are provided by residues D57, 118–122, and 140–143; these read GTIHD and TAPS. D145 is a binding site for substrate. S149 contacts NAD(+). D192 is a substrate binding site. Residues D192 and H272 each contribute to the Ni(2+) site. Residue H276 coordinates substrate. H292 serves as a coordination point for Ni(2+).

Belongs to the glycerol-1-phosphate dehydrogenase family. In terms of assembly, homodimer. The cofactor is Ni(2+).

It localises to the cytoplasm. The enzyme catalyses sn-glycerol 1-phosphate + NAD(+) = dihydroxyacetone phosphate + NADH + H(+). It carries out the reaction sn-glycerol 1-phosphate + NADP(+) = dihydroxyacetone phosphate + NADPH + H(+). Its function is as follows. Catalyzes the NAD(P)H-dependent reduction of dihydroxyacetonephosphate (DHAP or glycerone phosphate) to glycerol 1-phosphate (G1P). The G1P thus generated is probably used for the synthesis of phosphoglycerolipids in Gram-positive bacterial species. The protein is Glycerol-1-phosphate dehydrogenase [NAD(P)+] of Bacillus licheniformis (strain ATCC 14580 / DSM 13 / JCM 2505 / CCUG 7422 / NBRC 12200 / NCIMB 9375 / NCTC 10341 / NRRL NRS-1264 / Gibson 46).